The chain runs to 135 residues: Putative pre-16S rRNA nuclease (135 aa).

It belongs to the YqgF nuclease family.

The protein resides in the cytoplasm. Could be a nuclease involved in processing of the 5'-end of pre-16S rRNA. The polypeptide is Putative pre-16S rRNA nuclease (Clostridium acetobutylicum (strain ATCC 824 / DSM 792 / JCM 1419 / IAM 19013 / LMG 5710 / NBRC 13948 / NRRL B-527 / VKM B-1787 / 2291 / W)).